We begin with the raw amino-acid sequence, 229 residues long: Methyltransferase ctvB (229 aa).

It belongs to the methyltransferase superfamily.

Its pathway is mycotoxin biosynthesis. Its function is as follows. Methyltransferase; part of the gene cluster that mediates the biosynthesis of citreoviridin, an inhibitor of the of F1-ATPase beta-subunit. The HR-PKS ctvA accepts acetyl-CoA as the starter unit and catalyzes eight iterations of malonyl-CoA extension and four iterations of SAM-dependent methylation at C4, C12, C14, and C16. The KR and DH domains selectively act on the first six iterations to generate the hexaene chain. In the last three iterations, the KR and DH domains terminate their functions to yield a beta,delta-diketo ester moiety, which then undergoes intramolecular cyclization to yield an alpha-pyrone intermediate. Subsequently, ctvB methylates the alpha-pyrone hydroxyl group to generate citreomontanin. In order to form the tetrahydrofuran ring with the correct stereochemistry, the terminal alkenes of citreomontanin need to undergo isomerization to yield a (17Z)-hexaene, a step that could be catalyzed by ctvC. The (17Z)-hexaene then undergoes bisepoxidation by ctvC to form a (17R,16R,15S,14R)-bisepoxide moiety. Lastly, ctvD acts as a regioselective hydrolase to form the tetrahydrofuran ring with the substituents in the correct absolute configuration, completing the biosynthesis of citreoviridin. This Aspergillus terreus (strain NIH 2624 / FGSC A1156) protein is Methyltransferase ctvB.